Consider the following 601-residue polypeptide: Elongation factor 4 (601 aa).

The region spanning 6 to 188 is the tr-type G domain; sequence SRTRNFSIIA…DIVKNVPPPK (183 aa). Residues 18–23 and 135–138 contribute to the GTP site; these read DHGKST and NKID.

It belongs to the TRAFAC class translation factor GTPase superfamily. Classic translation factor GTPase family. LepA subfamily.

The protein localises to the cell membrane. It catalyses the reaction GTP + H2O = GDP + phosphate + H(+). Required for accurate and efficient protein synthesis under certain stress conditions. May act as a fidelity factor of the translation reaction, by catalyzing a one-codon backward translocation of tRNAs on improperly translocated ribosomes. Back-translocation proceeds from a post-translocation (POST) complex to a pre-translocation (PRE) complex, thus giving elongation factor G a second chance to translocate the tRNAs correctly. Binds to ribosomes in a GTP-dependent manner. The sequence is that of Elongation factor 4 from Clostridioides difficile (strain 630) (Peptoclostridium difficile).